We begin with the raw amino-acid sequence, 210 residues long: Redox-sensing transcriptional repressor Rex (210 aa).

A DNA-binding region (H-T-H motif) is located at residues valine 16 to phenylalanine 55. An NAD(+)-binding site is contributed by glycine 90 to glycine 95.

The protein belongs to the transcriptional regulatory Rex family. As to quaternary structure, homodimer.

The protein localises to the cytoplasm. Its function is as follows. Modulates transcription in response to changes in cellular NADH/NAD(+) redox state. This Desulfitobacterium hafniense (strain DSM 10664 / DCB-2) protein is Redox-sensing transcriptional repressor Rex.